A 154-amino-acid polypeptide reads, in one-letter code: Style cell-cycle inhibitor 1-A (154 aa).

Composition is skewed to basic and acidic residues over residues 1–11 and 24–48; these read MGSDKKTPEEK and DEVKSKRQNIKGDEERRKEKKDKSK. The segment at 1 to 84 is disordered; the sequence is MGSDKKTPEE…DKSKNKFEEL (84 aa). Positions 63 to 77 are enriched in basic residues; it reads GEKHKTKSHKHKDKS.

In terms of tissue distribution, specifically expressed in flowers pistils, especially in stigmas and styles. Barely detected in roots, stems, leaves, sepals, petals and stamen.

The protein resides in the nucleus. In terms of biological role, component of the auxin signaling transduction pathway that regulates cell proliferation and differentiation during flowers stigmas and styles development. Involved in the regulation of auxin-related genes. The protein is Style cell-cycle inhibitor 1-A of Nicotiana tabacum (Common tobacco).